A 156-amino-acid chain; its full sequence is Small ribosomal subunit protein uS7 (156 aa).

The protein belongs to the universal ribosomal protein uS7 family. Part of the 30S ribosomal subunit. Contacts proteins S9 and S11.

One of the primary rRNA binding proteins, it binds directly to 16S rRNA where it nucleates assembly of the head domain of the 30S subunit. Is located at the subunit interface close to the decoding center, probably blocks exit of the E-site tRNA. The chain is Small ribosomal subunit protein uS7 from Lactobacillus helveticus (strain DPC 4571).